The primary structure comprises 735 residues: Catalase-peroxidase (735 aa).

Residues 1-31 (MENNTNPISGQGKCPFSGGAAKQSAGAGTRN) form a disordered region. Low complexity predominate over residues 17-28 (SGGAAKQSAGAG). A cross-link (tryptophyl-tyrosyl-methioninium (Trp-Tyr) (with M-252)) is located at residues 103 to 226 (WHSAGTYRVA…LAAVQMGLIY (124 aa)). His104 serves as the catalytic Proton acceptor. The segment at residues 226-252 (YVNPEGPNGNPDPLASARDIRETFARM) is a cross-link (tryptophyl-tyrosyl-methioninium (Tyr-Met) (with W-103)). His267 lines the heme b pocket. Residues 352-371 (KPKNGAGAGTVPDAHNSSKS) are disordered.

Belongs to the peroxidase family. Peroxidase/catalase subfamily. In terms of assembly, homodimer or homotetramer. Requires heme b as cofactor. Formation of the three residue Trp-Tyr-Met cross-link is important for the catalase, but not the peroxidase activity of the enzyme.

It carries out the reaction H2O2 + AH2 = A + 2 H2O. The enzyme catalyses 2 H2O2 = O2 + 2 H2O. Its function is as follows. Bifunctional enzyme with both catalase and broad-spectrum peroxidase activity. This Flavobacterium psychrophilum (strain ATCC 49511 / DSM 21280 / CIP 103535 / JIP02/86) protein is Catalase-peroxidase.